Reading from the N-terminus, the 183-residue chain is MTGNIVARRYARALFALGKKSGLSDLETFGNDLAALAGTLETAPELVRMFRNPVFTPDEKRNVIAKLLDKLKVCPTVRNFCLLLADRERLAFIQDIQAYYGILLDAEKGVIRGELVTAIELANAKRDKVKAQLEAQAGRKLELGFSVDKNILGGVVLKVGDRILDASLRAQLGILKDNIKRGE.

This sequence belongs to the ATPase delta chain family. F-type ATPases have 2 components, F(1) - the catalytic core - and F(0) - the membrane proton channel. F(1) has five subunits: alpha(3), beta(3), gamma(1), delta(1), epsilon(1). F(0) has three main subunits: a(1), b(2) and c(10-14). The alpha and beta chains form an alternating ring which encloses part of the gamma chain. F(1) is attached to F(0) by a central stalk formed by the gamma and epsilon chains, while a peripheral stalk is formed by the delta and b chains.

It localises to the cell inner membrane. Its function is as follows. F(1)F(0) ATP synthase produces ATP from ADP in the presence of a proton or sodium gradient. F-type ATPases consist of two structural domains, F(1) containing the extramembraneous catalytic core and F(0) containing the membrane proton channel, linked together by a central stalk and a peripheral stalk. During catalysis, ATP synthesis in the catalytic domain of F(1) is coupled via a rotary mechanism of the central stalk subunits to proton translocation. This protein is part of the stalk that links CF(0) to CF(1). It either transmits conformational changes from CF(0) to CF(1) or is implicated in proton conduction. The sequence is that of ATP synthase subunit delta from Nitratidesulfovibrio vulgaris (strain ATCC 29579 / DSM 644 / CCUG 34227 / NCIMB 8303 / VKM B-1760 / Hildenborough) (Desulfovibrio vulgaris).